Here is a 59-residue protein sequence, read N- to C-terminus: Large ribosomal subunit protein bL32 (59 aa).

The tract at residues 1–25 (MAVQQNKKSPSKRGMHRSHDFLNAA) is disordered.

Belongs to the bacterial ribosomal protein bL32 family.

The protein is Large ribosomal subunit protein bL32 of Paraburkholderia phymatum (strain DSM 17167 / CIP 108236 / LMG 21445 / STM815) (Burkholderia phymatum).